Reading from the N-terminus, the 468-residue chain is Tumor necrosis factor receptor superfamily member 10A (468 aa).

Residues M1–A23 form the signal peptide. The segment at T17–A82 is disordered. Over residues P20–P34 the composition is skewed to low complexity. The Extracellular portion of the chain corresponds to A24–N239. The residue at position 52 (R52) is an Omega-N-methylarginine. Positions G63 to P74 are enriched in low complexity. 3 TNFR-Cys repeats span residues S107–C145, R147–C188, and Q189–C229. Cystine bridges form between C132–C145, C148–C164, C167–C180, C170–C188, C190–C204, C207–C221, and C211–C229. An N-linked (GlcNAc...) asparagine glycan is attached at N156. Residues I240–C262 traverse the membrane as a helical segment. The Cytoplasmic portion of the chain corresponds to C263–E468. The 84-residue stretch at M365–L448 folds into the Death domain. 3 positions are modified to phosphoserine: S424, S463, and S466.

Monomer. Homooligomers and heterooligomers with TNFRSF10B. Three TNFRSF10A molecules interact with the TNFSF10 homotrimer. Can interact with TRADD and RIPK1. Interacts with ARAP1. In the absence of stimulation, interacts with BIRC2, DDX3X and GSK3B. The interaction with BIRC2 and DDX3X is further enhanced upon receptor stimulation and accompanied by DDX3X and BIRC2 cleavage. Interacts with ZDHHC3. Interacts with PTPN6; this interaction enables the inhibition of T-cell receptor signaling via LCK. As to quaternary structure, (Microbial infection) Interacts with HCMV protein UL141; this interaction prevents TNFRSF10A cell surface expression. Post-translationally, palmitoylated. Palmitoylation of TNFRSF10A is required for its association with lipid rafts, oligomerization and function in TRAIL-induced cell death. Palmitoylated by ZDHHC3. Widely expressed. High levels are found in spleen, peripheral blood leukocytes, small intestine and thymus, but also in K-562 erythroleukemia cells, MCF-7 breast carcinoma cells and activated T-cells.

The protein resides in the cell membrane. It is found in the membrane raft. It localises to the cytoplasm. Its subcellular location is the cytosol. Receptor for the cytotoxic ligand TNFSF10/TRAIL. The adapter molecule FADD recruits caspase-8 to the activated receptor. The resulting death-inducing signaling complex (DISC) performs caspase-8 proteolytic activation which initiates the subsequent cascade of caspases (aspartate-specific cysteine proteases) mediating apoptosis. Promotes the activation of NF-kappa-B. The sequence is that of Tumor necrosis factor receptor superfamily member 10A (TNFRSF10A) from Homo sapiens (Human).